Reading from the N-terminus, the 379-residue chain is Pentatricopeptide repeat-containing protein At3g25210, mitochondrial (379 aa).

PPR repeat units lie at residues 142-177 (SVPLYNCIIRFCCGRKFLFNRAFDVYNKMLRSDDSK), 179-221 (DLET…GVIP), 222-256 (DTFVLNMIIKAYAKCLEVDEAIRVFKEMALYGSEP), 257-291 (NAYTYSYLVKGVCEKGRVGQGLGFYKEMQVKGMVP), 292-326 (NGSCYMVLICSLSMERRLDEAVEVVYDMLANSLSP), and 327-361 (DMLTYNTVLTELCRGGRGSEALEMVEEWKKRDPVM).

This sequence belongs to the PPR family. P subfamily.

It localises to the mitochondrion. This Arabidopsis thaliana (Mouse-ear cress) protein is Pentatricopeptide repeat-containing protein At3g25210, mitochondrial.